A 132-amino-acid chain; its full sequence is Global transcriptional regulator Spx (132 aa).

Cysteine 10 and cysteine 13 form a disulfide bridge.

This sequence belongs to the ArsC family. Spx subfamily. In terms of assembly, interacts with the C-terminal domain of the alpha subunit of the RNAP.

It localises to the cytoplasm. Its function is as follows. Global transcriptional regulator that plays a key role in stress response and exerts either positive or negative regulation of genes. Acts by interacting with the C-terminal domain of the alpha subunit of the RNA polymerase (RNAP). This interaction can enhance binding of RNAP to the promoter region of target genes and stimulate their transcription, or block interaction of RNAP with activator. This is Global transcriptional regulator Spx from Lactiplantibacillus plantarum (strain ATCC BAA-793 / NCIMB 8826 / WCFS1) (Lactobacillus plantarum).